The following is a 216-amino-acid chain: UPF0134 protein MPN_344 (216 aa).

A compositionally biased stretch (basic and acidic residues) spans 47 to 62 (FTIIEDQQDRPDKPEE). Disordered stretches follow at residues 47–104 (FTII…PKPD) and 194–216 (GKMD…LESK). Residues 68–78 (IPKPPKPPKGP) show a composition bias toward pro residues. Residues 83 to 93 (EPGQPGGPDDP) are compositionally biased toward low complexity.

Belongs to the UPF0134 family.

The protein is UPF0134 protein MPN_344 of Mycoplasma pneumoniae (strain ATCC 29342 / M129 / Subtype 1) (Mycoplasmoides pneumoniae).